Reading from the N-terminus, the 426-residue chain is Zinc finger CCCH domain-containing protein 13 (426 aa).

The segment at 10–36 (AYKTKLCALWQRGNCNRDTCSFAHGHG) adopts a C3H1-type zinc-finger fold. Disordered stretches follow at residues 34 to 155 (GHGD…HEKQ), 253 to 317 (NEEG…DKTS), and 390 to 426 (NDADDKTRSPAIPLQPPPVVQNAYEQYEGDDEEVDVE). Basic and acidic residues-rich tracts occupy residues 54–70 (RRDYRAGDFRGRIDRRF), 78–101 (PGRESRGHRPLYDRRPSSRERDSS), and 108–120 (RKSERRHEKKTDD). Residues 124 to 133 (NSSRSLSLSD) are compositionally biased toward low complexity. Residues 135-155 (NDEKKKDKFSSGDEKEDHEKQ) are compositionally biased toward basic and acidic residues. The stretch at 144 to 245 (SSGDEKEDHE…FERLGDLLAS (102 aa)) forms a coiled coil. A compositionally biased stretch (polar residues) spans 255–272 (EGSSVNEDLNERSPNTAA). Residues 284–317 (EEAKAVKKRRERDSDTMTRSDKYRSDVTDFDKTS) show a composition bias toward basic and acidic residues. Acidic residues predominate over residues 416–426 (YEGDDEEVDVE).

The protein is Zinc finger CCCH domain-containing protein 13 of Oryza sativa subsp. japonica (Rice).